The sequence spans 110 residues: uncharacterized protein (110 aa).

The N-terminal stretch at 1–26 (MIRNVLLAFMICSGMTLLGGCSSVMS) is a signal peptide. A disordered region spans residues 87–110 (RVEKSEANAQATNAVIPPARMPDN).

To E.coli YceK.

This is an uncharacterized protein from Escherichia coli (strain K12).